The sequence spans 239 residues: Protein Thf1 (239 aa).

Positions 183–221 (ERVRKDLELYRSSLDRMKQARAVVEEMVKAARRQQERRQ) form a coiled coil. Residues 211 to 221 (KAARRQQERRQ) are compositionally biased toward basic and acidic residues. The segment at 211–239 (KAARRQQERRQSAASLPETSLGDPSKPGS) is disordered.

Belongs to the THF1 family.

Functionally, may be involved in photosynthetic membrane biogenesis. This is Protein Thf1 from Synechococcus sp. (strain JA-2-3B'a(2-13)) (Cyanobacteria bacterium Yellowstone B-Prime).